The following is a 515-amino-acid chain: ATP synthase subunit alpha (515 aa).

Position 171 to 178 (171 to 178 (GDRQTGKT)) interacts with ATP.

It belongs to the ATPase alpha/beta chains family. In terms of assembly, F-type ATPases have 2 components, CF(1) - the catalytic core - and CF(0) - the membrane proton channel. CF(1) has five subunits: alpha(3), beta(3), gamma(1), delta(1), epsilon(1). CF(0) has three main subunits: a(1), b(2) and c(9-12). The alpha and beta chains form an alternating ring which encloses part of the gamma chain. CF(1) is attached to CF(0) by a central stalk formed by the gamma and epsilon chains, while a peripheral stalk is formed by the delta and b chains.

It localises to the cell inner membrane. It catalyses the reaction ATP + H2O + 4 H(+)(in) = ADP + phosphate + 5 H(+)(out). Produces ATP from ADP in the presence of a proton gradient across the membrane. The alpha chain is a regulatory subunit. The polypeptide is ATP synthase subunit alpha (Xylella fastidiosa (strain 9a5c)).